A 449-amino-acid polypeptide reads, in one-letter code: Tubulin alpha-1C chain (449 aa).

Residues 1–4 (MREC) carry the MREC motif motif. Q11 is a binding site for GTP. K40 carries the post-translational modification N6-acetyllysine. The GTP site is built by E71, S140, G144, T145, T179, N206, and N228. Residue E71 participates in Mg(2+) binding. Residue E254 is part of the active site. At Y282 the chain carries 3'-nitrotyrosine. Y432 carries the phosphotyrosine modification. Residue S439 is modified to Phosphoserine. Y449 carries the post-translational modification 3'-nitrotyrosine.

This sequence belongs to the tubulin family. Dimer of alpha and beta chains. A typical microtubule is a hollow water-filled tube with an outer diameter of 25 nm and an inner diameter of 15 nM. Alpha-beta heterodimers associate head-to-tail to form protofilaments running lengthwise along the microtubule wall with the beta-tubulin subunit facing the microtubule plus end conferring a structural polarity. Microtubules usually have 13 protofilaments but different protofilament numbers can be found in some organisms and specialized cells. It depends on Mg(2+) as a cofactor. In terms of processing, some glutamate residues at the C-terminus are polyglycylated, resulting in polyglycine chains on the gamma-carboxyl group. Glycylation is mainly limited to tubulin incorporated into axonemes (cilia and flagella) whereas glutamylation is prevalent in neuronal cells, centrioles, axonemes, and the mitotic spindle. Both modifications can coexist on the same protein on adjacent residues, and lowering polyglycylation levels increases polyglutamylation, and reciprocally. Cilia and flagella glycylation is required for their stability and maintenance. Flagella glycylation controls sperm motility. Post-translationally, some glutamate residues at the C-terminus are polyglutamylated, resulting in polyglutamate chains on the gamma-carboxyl group. Polyglutamylation plays a key role in microtubule severing by spastin (SPAST). SPAST preferentially recognizes and acts on microtubules decorated with short polyglutamate tails: severing activity by SPAST increases as the number of glutamates per tubulin rises from one to eight, but decreases beyond this glutamylation threshold. Glutamylation is also involved in cilia motility. Acetylation of alpha chains at Lys-40 is located inside the microtubule lumen. This modification has been correlated with increased microtubule stability, intracellular transport and ciliary assembly. In terms of processing, methylation of alpha chains at Lys-40 is found in mitotic microtubules and is required for normal mitosis and cytokinesis contributing to genomic stability. Post-translationally, nitration of Tyr-449 is irreversible and interferes with normal dynein intracellular distribution. Undergoes a tyrosination/detyrosination cycle, the cyclic removal and re-addition of a C-terminal tyrosine residue by the enzymes tubulin tyrosine carboxypeptidase (MATCAP1, VASH1 or VASH2) and tubulin tyrosine ligase (TTL), respectively. In terms of processing, tyrosination promotes microtubule interaction with CAP-Gly domain-containing proteins such as CLIP1, CLIP2 and DCTN1. Tyrosination regulates the initiation of dynein-dynactin motility via interaction with DCTN1, which brings the dynein-dynactin complex into contact with microtubules. In neurons, tyrosinated tubulins mediate the initiation of retrograde vesicle transport. Post-translationally, detyrosination is involved in metaphase plate congression by guiding chromosomes during mitosis: detyrosination promotes interaction with CENPE, promoting pole-proximal transport of chromosomes toward the equator. Detyrosination increases microtubules-dependent mechanotransduction in dystrophic cardiac and skeletal muscle. In cardiomyocytes, detyrosinated microtubules are required to resist to contractile compression during contraction: detyrosination promotes association with desmin (DES) at force-generating sarcomeres, leading to buckled microtubules and mechanical resistance to contraction. In terms of tissue distribution, minor alpha-tubulin expressed in all tissues.

The protein resides in the cytoplasm. The protein localises to the cytoskeleton. The catalysed reaction is GTP + H2O = GDP + phosphate + H(+). Functionally, tubulin is the major constituent of microtubules, a cylinder consisting of laterally associated linear protofilaments composed of alpha- and beta-tubulin heterodimers. Microtubules grow by the addition of GTP-tubulin dimers to the microtubule end, where a stabilizing cap forms. Below the cap, tubulin dimers are in GDP-bound state, owing to GTPase activity of alpha-tubulin. The polypeptide is Tubulin alpha-1C chain (Tuba1c) (Mus musculus (Mouse)).